The following is a 338-amino-acid chain: Cytochrome P450 monooxygenase easK (338 aa).

The N-terminal stretch at 1-16 (MLLLTFTLPVVTLLLA) is a signal peptide. Residues Asn240 and Asn327 are each glycosylated (N-linked (GlcNAc...) asparagine).

The protein belongs to the cytochrome P450 family. Requires heme as cofactor.

Its pathway is alkaloid biosynthesis; ergot alkaloid biosynthesis. Functionally, cytochrome P450 monooxygenase; part of the gene cluster that mediates the biosynthesis of fumiclavanine C, a fungal ergot alkaloid. DmaW catalyzes the first step of ergot alkaloid biosynthesis by condensing dimethylallyl diphosphate (DMAP) and tryptophan to form 4-dimethylallyl-L-tryptophan. The second step is catalyzed by the methyltransferase easF that methylates 4-dimethylallyl-L-tryptophan in the presence of S-adenosyl-L-methionine, resulting in the formation of 4-dimethylallyl-L-abrine. The catalase easC and the FAD-dependent oxidoreductase easE then transform 4-dimethylallyl-L-abrine to chanoclavine-I which is further oxidized by EasD in the presence of NAD(+), resulting in the formation of chanoclavine-I aldehyde. EasA reduces chanoclavine-I aldehyde to dihydrochanoclavine-I aldehyde that spontaneously dehydrates to form 6,8-dimethyl-6,7-didehydroergoline. EasG then catalyzes the reduction of 6,8-dimethyl-6,7-didehydroergoline to form festuclavine. Hydrolysis of festuclavine by easM then leads to the formation of fumigaclavine B which is in turn acetylated by easN to fumigaclavine A. Finally, easL catalyzes the conversion of fumigaclavine A into fumigaclavine C by attaching a dimethylallyl moiety to C-2 of the indole nucleus. The role of the cytochrome P450 monooxygenase easK within the cluster has not been identified yet. The sequence is that of Cytochrome P450 monooxygenase easK from Aspergillus fumigatus (strain ATCC MYA-4609 / CBS 101355 / FGSC A1100 / Af293) (Neosartorya fumigata).